The following is a 215-amino-acid chain: Cytochrome b6 (215 aa).

A helical transmembrane segment spans residues 32–52 (IFYCLGGVTLICFLVQFATGF). Heme c is bound at residue Cys-35. The heme b site is built by His-86 and His-100. A run of 3 helical transmembrane segments spans residues 90-110 (ASMM…TGGF), 116-136 (LTWV…VTGY), and 186-206 (AHTF…FLMI). Heme b is bound by residues His-187 and His-202.

Belongs to the cytochrome b family. PetB subfamily. In terms of assembly, the 4 large subunits of the cytochrome b6-f complex are cytochrome b6, subunit IV (17 kDa polypeptide, PetD), cytochrome f and the Rieske protein, while the 4 small subunits are PetG, PetL, PetM and PetN. The complex functions as a dimer. The cofactor is heme b. It depends on heme c as a cofactor.

The protein localises to the cell inner membrane. Functionally, component of the cytochrome b6-f complex, which mediates electron transfer between photosystem II (PSII) and photosystem I (PSI), cyclic electron flow around PSI, and state transitions. This is Cytochrome b6 from Gloeobacter violaceus (strain ATCC 29082 / PCC 7421).